Consider the following 403-residue polypeptide: S-adenosylmethionine synthase (403 aa).

His15 contacts ATP. A Mg(2+)-binding site is contributed by Asp17. Glu43 is a binding site for K(+). L-methionine is bound by residues Glu56 and Gln99. A flexible loop region spans residues 99–109 (QSPDINQGVDR). Residues 166–168 (DAK), 232–233 (KF), Asp241, 247–248 (RK), Ala264, and Lys268 contribute to the ATP site. L-methionine is bound at residue Asp241. L-methionine is bound at residue Lys272.

It belongs to the AdoMet synthase family. In terms of assembly, homotetramer; dimer of dimers. Mg(2+) is required as a cofactor. K(+) serves as cofactor.

The protein resides in the cytoplasm. It catalyses the reaction L-methionine + ATP + H2O = S-adenosyl-L-methionine + phosphate + diphosphate. It participates in amino-acid biosynthesis; S-adenosyl-L-methionine biosynthesis; S-adenosyl-L-methionine from L-methionine: step 1/1. Catalyzes the formation of S-adenosylmethionine (AdoMet) from methionine and ATP. The overall synthetic reaction is composed of two sequential steps, AdoMet formation and the subsequent tripolyphosphate hydrolysis which occurs prior to release of AdoMet from the enzyme. The chain is S-adenosylmethionine synthase from Xylella fastidiosa (strain M12).